The sequence spans 277 residues: Formamidopyrimidine-DNA glycosylase (277 aa).

The Schiff-base intermediate with DNA role is filled by proline 2. The active-site Proton donor is glutamate 3. Lysine 58 functions as the Proton donor; for beta-elimination activity in the catalytic mechanism. Positions 97, 116, and 158 each coordinate DNA. Residues asparagine 243–arginine 277 form an FPG-type zinc finger. Arginine 267 (proton donor; for delta-elimination activity) is an active-site residue.

It belongs to the FPG family. Monomer. The cofactor is Zn(2+).

The catalysed reaction is Hydrolysis of DNA containing ring-opened 7-methylguanine residues, releasing 2,6-diamino-4-hydroxy-5-(N-methyl)formamidopyrimidine.. It catalyses the reaction 2'-deoxyribonucleotide-(2'-deoxyribose 5'-phosphate)-2'-deoxyribonucleotide-DNA = a 3'-end 2'-deoxyribonucleotide-(2,3-dehydro-2,3-deoxyribose 5'-phosphate)-DNA + a 5'-end 5'-phospho-2'-deoxyribonucleoside-DNA + H(+). Involved in base excision repair of DNA damaged by oxidation or by mutagenic agents. Acts as a DNA glycosylase that recognizes and removes damaged bases. Has a preference for oxidized purines, such as 7,8-dihydro-8-oxoguanine (8-oxoG). Has AP (apurinic/apyrimidinic) lyase activity and introduces nicks in the DNA strand. Cleaves the DNA backbone by beta-delta elimination to generate a single-strand break at the site of the removed base with both 3'- and 5'-phosphates. This Alkalilimnicola ehrlichii (strain ATCC BAA-1101 / DSM 17681 / MLHE-1) protein is Formamidopyrimidine-DNA glycosylase.